Here is a 202-residue protein sequence, read N- to C-terminus: uncharacterized protein (202 aa).

This is an uncharacterized protein from Saccharomyces cerevisiae (strain ATCC 204508 / S288c) (Baker's yeast).